Reading from the N-terminus, the 208-residue chain is 2-phospho-L-lactate guanylyltransferase (208 aa).

The protein belongs to the CofC family. In terms of assembly, homodimer.

It carries out the reaction (2S)-2-phospholactate + GTP + H(+) = (2S)-lactyl-2-diphospho-5'-guanosine + diphosphate. Its pathway is cofactor biosynthesis; coenzyme F420 biosynthesis. Functionally, guanylyltransferase that catalyzes the activation of (2S)-2-phospholactate (2-PL) as (2S)-lactyl-2-diphospho-5'-guanosine, via the condensation of 2-PL with GTP. It is involved in the biosynthesis of coenzyme F420, a hydride carrier cofactor. This chain is 2-phospho-L-lactate guanylyltransferase, found in Methanosarcina mazei (strain ATCC BAA-159 / DSM 3647 / Goe1 / Go1 / JCM 11833 / OCM 88) (Methanosarcina frisia).